The following is a 295-amino-acid chain: Bifunctional protein FolD (295 aa).

NADP(+) contacts are provided by residues 165 to 167 (GRS), S190, and I231.

It belongs to the tetrahydrofolate dehydrogenase/cyclohydrolase family. As to quaternary structure, homodimer.

The enzyme catalyses (6R)-5,10-methylene-5,6,7,8-tetrahydrofolate + NADP(+) = (6R)-5,10-methenyltetrahydrofolate + NADPH. The catalysed reaction is (6R)-5,10-methenyltetrahydrofolate + H2O = (6R)-10-formyltetrahydrofolate + H(+). It functions in the pathway one-carbon metabolism; tetrahydrofolate interconversion. In terms of biological role, catalyzes the oxidation of 5,10-methylenetetrahydrofolate to 5,10-methenyltetrahydrofolate and then the hydrolysis of 5,10-methenyltetrahydrofolate to 10-formyltetrahydrofolate. The protein is Bifunctional protein FolD of Nitrosomonas eutropha (strain DSM 101675 / C91 / Nm57).